The following is a 283-amino-acid chain: 4-diphosphocytidyl-2-C-methyl-D-erythritol kinase (283 aa).

The active site involves K10. Residue 99–109 (PMGGGLGGGSS) coordinates ATP. Residue D141 is part of the active site.

Belongs to the GHMP kinase family. IspE subfamily. In terms of assembly, homodimer.

It carries out the reaction 4-CDP-2-C-methyl-D-erythritol + ATP = 4-CDP-2-C-methyl-D-erythritol 2-phosphate + ADP + H(+). The protein operates within isoprenoid biosynthesis; isopentenyl diphosphate biosynthesis via DXP pathway; isopentenyl diphosphate from 1-deoxy-D-xylulose 5-phosphate: step 3/6. Functionally, catalyzes the phosphorylation of the position 2 hydroxy group of 4-diphosphocytidyl-2C-methyl-D-erythritol. This chain is 4-diphosphocytidyl-2-C-methyl-D-erythritol kinase, found in Shigella boydii serotype 18 (strain CDC 3083-94 / BS512).